The primary structure comprises 195 residues: Large ribosomal subunit protein eL15 (195 aa).

Residues 174–195 (GHGRLGSAKSRPSIRANGRLRR) are disordered.

It belongs to the eukaryotic ribosomal protein eL15 family.

This is Large ribosomal subunit protein eL15 from Picrophilus torridus (strain ATCC 700027 / DSM 9790 / JCM 10055 / NBRC 100828 / KAW 2/3).